Reading from the N-terminus, the 304-residue chain is N-acetylmuramic acid 6-phosphate etherase (304 aa).

Residues 58–221 form the SIS domain; the sequence is IAERIHRGGR…STGVMIKLGK (164 aa). E86 acts as the Proton donor in catalysis. The active site involves E117.

The protein belongs to the GCKR-like family. MurNAc-6-P etherase subfamily. As to quaternary structure, homodimer.

It carries out the reaction N-acetyl-D-muramate 6-phosphate + H2O = N-acetyl-D-glucosamine 6-phosphate + (R)-lactate. Its pathway is amino-sugar metabolism; N-acetylmuramate degradation. Functionally, specifically catalyzes the cleavage of the D-lactyl ether substituent of MurNAc 6-phosphate, producing GlcNAc 6-phosphate and D-lactate. The polypeptide is N-acetylmuramic acid 6-phosphate etherase (Clostridium beijerinckii (strain ATCC 51743 / NCIMB 8052) (Clostridium acetobutylicum)).